Here is a 190-residue protein sequence, read N- to C-terminus: Dynein axonemal light chain 1 (190 aa).

LRR repeat units lie at residues 49 to 70 (VCEKLSLSTNCIEKIANLNGLK), 71 to 92 (NLKILSLGRNNIKNLNGLEAVG), 94 to 115 (SLEELWISYNSIEKLKGIHVLK), and 116 to 137 (KLKVLLMSNNQVKDWGEFNKLQ). Residues 150 to 190 (NPLEEKHSAEGDWQDRVTKSLKALKKLDGTPIIKNDEEEED) form the LRRCT domain.

It belongs to the dynein light chain LC1-type family. As to quaternary structure, interacts with DNAH5, a outer arm dynein heavy chain. Interacts with tubulin located within the A-tubule of the outer doublets in a ATP-independent manner.

It is found in the cytoplasm. The protein localises to the cytoskeleton. Its subcellular location is the cilium axoneme. In terms of biological role, part of the multisubunit axonemal ATPase complexes that generate the force for cilia motility and govern beat frequency. Component of the outer arm dynein (ODA). May be involved in a mechanosensory feedback mechanism controlling ODA activity based on external conformational cues by tethering the outer arm dynein heavy chain (DNAH5) to the microtubule within the axoneme. This chain is Dynein axonemal light chain 1 (DNAL1), found in Ciona intestinalis (Transparent sea squirt).